A 27-amino-acid polypeptide reads, in one-letter code: Protein YkiD (27 aa).

The protein is Protein YkiD of Escherichia coli (strain K12).